Reading from the N-terminus, the 175-residue chain is B9 domain-containing protein 2 (175 aa).

The C2 B9-type domain maps to 2–118 (AEVHVIGQII…DCPTWRPLGS (117 aa)).

It belongs to the B9D family. As to quaternary structure, part of the tectonic-like complex (also named B9 complex). Interacts with TUBG1.

The protein resides in the cytoplasm. Its subcellular location is the cytoskeleton. The protein localises to the cilium basal body. It localises to the cilium axoneme. It is found in the nucleus. Component of the tectonic-like complex, a complex localized at the transition zone of primary cilia and acting as a barrier that prevents diffusion of transmembrane proteins between the cilia and plasma membranes. This Rattus norvegicus (Rat) protein is B9 domain-containing protein 2 (B9d2).